The following is a 163-amino-acid chain: MNLEDLAKKTISEVSSIMEEQRRQNEILKEQELNRKTEIKDELPPMEFVCEELDTPQDLEDKISMAKFEEEQKIQNNIEISTQENKEFKKEEPFLQNEILNPSVMTEVQTLNEDIFLKHLRERILVLFEGLNSIKKDDLENRLNLTINFLEFLLANIEDKLKK.

An MKD motif is present at residues 135 to 145 (KKDDLENRLNL).

As to quaternary structure, interacts with the host cell protein IQGAP1, thus displacing RACGAP1 from the IQGAP1 complex.

The protein resides in the secreted. It localises to the host cytoplasm. The protein localises to the host cytosol. Its function is as follows. Effector protein required for the development of acute disease and colon inflammatory lesions. Required for maximal host cell invasion and maximal secretion of the inflammatory chemokine interleukin-8 (IL-8) from host cells. Acts by activating the host MAP kinase signaling pathways ERK-1/2 and p38 to promote both cellular invasion and the release of IL-8. CiaD mediated activation of ERK-1/2 leads to the phosphorylation of host cortactin (CTTN) on serine residues and association of cortactin with N-WASP, promoting actin cytoskeleton rearrangement, membrane ruffling and host cell invasion. In addition, maximal host cell invasion requires interaction with the host cell protein IQGAP1, a Ras GTPase-activating-like protein. Binding to IQGAP1 facilitates the activation of the Rho GTPases RAC1 and CDC42, further promoting actin reorganization and bacterial uptake. CiaD promotes RAC1 activation by excluding RACGAP1 from the IQGAP1 complex, preventing the deactivation of RAC1. CiaD probably activates ERK signaling upstream or independently of IQGAP1. This chain is Campylobacter invasion antigen D, found in Campylobacter jejuni subsp. jejuni serotype O:2 (strain ATCC 700819 / NCTC 11168).